Here is a 195-residue protein sequence, read N- to C-terminus: Protein GrpE (195 aa).

Residues 1–20 (MSSKEQKTPDEQVLDQKEAA) show a composition bias toward basic and acidic residues. The interval 1 to 40 (MSSKEQKTPDEQVLDQKEAAKGQQADAAPETADVADPRDA) is disordered.

The protein belongs to the GrpE family. As to quaternary structure, homodimer.

It localises to the cytoplasm. Its function is as follows. Participates actively in the response to hyperosmotic and heat shock by preventing the aggregation of stress-denatured proteins, in association with DnaK and GrpE. It is the nucleotide exchange factor for DnaK and may function as a thermosensor. Unfolded proteins bind initially to DnaJ; upon interaction with the DnaJ-bound protein, DnaK hydrolyzes its bound ATP, resulting in the formation of a stable complex. GrpE releases ADP from DnaK; ATP binding to DnaK triggers the release of the substrate protein, thus completing the reaction cycle. Several rounds of ATP-dependent interactions between DnaJ, DnaK and GrpE are required for fully efficient folding. The chain is Protein GrpE from Pectobacterium carotovorum subsp. carotovorum (strain PC1).